The sequence spans 118 residues: Aspartate 1-decarboxylase (118 aa).

The active-site Schiff-base intermediate with substrate; via pyruvic acid is Ser-25. Ser-25 bears the Pyruvic acid (Ser) mark. Position 57 (Thr-57) interacts with substrate. Tyr-58 (proton donor) is an active-site residue. 73 to 75 (GAA) lines the substrate pocket.

This sequence belongs to the PanD family. Heterooctamer of four alpha and four beta subunits. Pyruvate serves as cofactor. Is synthesized initially as an inactive proenzyme, which is activated by self-cleavage at a specific serine bond to produce a beta-subunit with a hydroxyl group at its C-terminus and an alpha-subunit with a pyruvoyl group at its N-terminus.

The protein resides in the cytoplasm. It carries out the reaction L-aspartate + H(+) = beta-alanine + CO2. Its pathway is cofactor biosynthesis; (R)-pantothenate biosynthesis; beta-alanine from L-aspartate: step 1/1. Its function is as follows. Catalyzes the pyruvoyl-dependent decarboxylation of aspartate to produce beta-alanine. The sequence is that of Aspartate 1-decarboxylase from Leptospira biflexa serovar Patoc (strain Patoc 1 / Ames).